We begin with the raw amino-acid sequence, 104 residues long: Flagellar hook-basal body complex protein FliE (104 aa).

Belongs to the FliE family.

It is found in the bacterial flagellum basal body. In Salmonella newport (strain SL254), this protein is Flagellar hook-basal body complex protein FliE.